We begin with the raw amino-acid sequence, 228 residues long: MMYHIPGVLSPQDVARFREQLEQAEWVDGRVTTGAQGAQVKNNQQVDTRSTLYAALQNEVLNAVNQHALFFAAALPRTLSTPLFNRYQNNETYGFHVDGAVRSHPQNGWMRTDLSATLFLSDPQSYDGGELVVNDTFGQHRVKLPAGDLVLYPSSSLHCVTPVTRGVRVASFIWIQSMIRDDKKRAMLFELDKNIQNIQSLKSRYGENEEILSLLNLYHNLLREWSEI.

The Fe2OG dioxygenase domain occupies 78–177; that stretch reads TLSTPLFNRY…RVASFIWIQS (100 aa). 3 residues coordinate Fe cation: H96, D98, and H158. Residue R168 participates in 2-oxoglutarate binding.

It depends on Fe(2+) as a cofactor. L-ascorbate is required as a cofactor.

The protein is PKHD-type hydroxylase YbiX of Escherichia coli O157:H7.